Here is a 150-residue protein sequence, read N- to C-terminus: Large ribosomal subunit protein bL9 (150 aa).

Belongs to the bacterial ribosomal protein bL9 family.

Its function is as follows. Binds to the 23S rRNA. This Burkholderia thailandensis (strain ATCC 700388 / DSM 13276 / CCUG 48851 / CIP 106301 / E264) protein is Large ribosomal subunit protein bL9.